The sequence spans 224 residues: V-type ATP synthase subunit D (224 aa).

A disordered region spans residues 190 to 224; sequence REAGYTQKKIKAKIEGKNKEAREAAAATSHGSAAD. The span at 201–212 shows a compositional bias: basic and acidic residues; that stretch reads AKIEGKNKEARE. Positions 213–224 are enriched in low complexity; the sequence is AAAATSHGSAAD.

Belongs to the V-ATPase D subunit family.

Produces ATP from ADP in the presence of a proton gradient across the membrane. The sequence is that of V-type ATP synthase subunit D (atpD) from Deinococcus radiodurans (strain ATCC 13939 / DSM 20539 / JCM 16871 / CCUG 27074 / LMG 4051 / NBRC 15346 / NCIMB 9279 / VKM B-1422 / R1).